Reading from the N-terminus, the 37-residue chain is Mastoparan-VT (37 aa).

The propeptide occupies 1–22 (EALADPIADPVAGPNPEADPEA). AXPX repeat units lie at residues 4–7 (ADPI), 8–11 (ADPV), 12–15 (AGPN), and 18–21 (ADPE). Leucine amide is present on L36.

This sequence belongs to the MCD family. Mastoparan subfamily. In terms of tissue distribution, expressed by the venom gland.

The protein resides in the secreted. It is found in the target cell membrane. Antimicrobial peptide with potent activity against both Gram-positive (S.aureus MIC=50 ug/ml, and B.subtilis MIC=25 ug/ml) and Gram-negative bacteria (P.aeruginosa MIC=25 ug/ml, E.coli MIC=3-50 ug/ml, K.pneumoniae MIC=25 ug/ml). Exhibits little hemolytic activity on human erythrocytes. The sequence is that of Mastoparan-VT from Vespa tropica (Greater banded hornet).